The following is a 1165-amino-acid chain: TBC1 domain family member 1 (1165 aa).

Position 146 is a phosphoserine (S146). Residues 207 to 234 are disordered; sequence FSSDQSRSALQPPGDGERGPRPMRKSFS. S232 is modified (phosphoserine; by PKB/AKT1). S234 carries the post-translational modification Phosphoserine; by AMPK. Residues 243-401 enclose the PID domain; it reads FRKEFQDAGL…LHKLCERIEG (159 aa). S500 is modified (phosphoserine). Residue T502 is modified to Phosphothreonine; by PKB/AKT1. Residues S504, S522, S524, S562, S563, S567, S568, and S582 each carry the phosphoserine modification. T593 carries the phosphothreonine modification. Phosphoserine is present on S611. S624 is subject to Phosphoserine; by PKB/AKT1. Residues 624-651 are disordered; sequence SVSTETPHERKDFESKADHISDASRTPV. A compositionally biased stretch (basic and acidic residues) spans 629-645; the sequence is TPHERKDFESKADHISD. Phosphoserine occurs at positions 692 and 938. Positions 797–991 constitute a Rab-GAP TBC domain; that stretch reads GVPRHHRGEI…RVFDMIFLQG (195 aa). The residue at position 949 (Y949) is a Phosphotyrosine. A disordered region spans residues 1146 to 1165; it reads QTAELGSQESDPTLPKPSGD.

As to quaternary structure, interacts with APPL2 (via BAR domain); interaction is dependent of TBC1D1 phosphorylation at Ser-232; interaction diminishes the phosphorylation of TBC1D1 at Thr-593, resulting in inhibition of SLC2A4/GLUT4 translocation and glucose uptake. In terms of processing, insulin-stimulated phosphorylation by AKT family kinases stimulates SLC2A4/GLUT4 translocation.

It is found in the nucleus. Functionally, may act as a GTPase-activating protein for Rab family protein(s). May play a role in the cell cycle and differentiation of various tissues. Involved in the trafficking and translocation of GLUT4-containing vesicles and insulin-stimulated glucose uptake into cells. This Bos taurus (Bovine) protein is TBC1 domain family member 1 (TBC1D1).